We begin with the raw amino-acid sequence, 134 residues long: ATP synthase epsilon chain (134 aa).

Belongs to the ATPase epsilon chain family. F-type ATPases have 2 components, CF(1) - the catalytic core - and CF(0) - the membrane proton channel. CF(1) has five subunits: alpha(3), beta(3), gamma(1), delta(1), epsilon(1). CF(0) has three main subunits: a, b and c.

Its subcellular location is the cell membrane. Functionally, produces ATP from ADP in the presence of a proton gradient across the membrane. The polypeptide is ATP synthase epsilon chain (Clostridium botulinum (strain Eklund 17B / Type B)).